Here is a 263-residue protein sequence, read N- to C-terminus: Glucosamine-6-phosphate deaminase (263 aa).

The Proton acceptor; for enolization step role is filled by Asp-72. Asp-141 (for ring-opening step) is an active-site residue. Catalysis depends on His-143, which acts as the Proton acceptor; for ring-opening step. Glu-148 acts as the For ring-opening step in catalysis.

It belongs to the glucosamine/galactosamine-6-phosphate isomerase family. NagB subfamily.

It catalyses the reaction alpha-D-glucosamine 6-phosphate + H2O = beta-D-fructose 6-phosphate + NH4(+). The protein operates within amino-sugar metabolism; N-acetylneuraminate degradation; D-fructose 6-phosphate from N-acetylneuraminate: step 5/5. With respect to regulation, allosterically activated by N-acetylglucosamine 6-phosphate (GlcNAc6P). In terms of biological role, catalyzes the reversible isomerization-deamination of glucosamine 6-phosphate (GlcN6P) to form fructose 6-phosphate (Fru6P) and ammonium ion. In Porphyromonas gingivalis (strain ATCC BAA-308 / W83), this protein is Glucosamine-6-phosphate deaminase.